The chain runs to 416 residues: Lysosome-associated membrane glycoprotein 3 (416 aa).

Positions 1-27 are cleaved as a signal peptide; it reads MPRQLSAAAALFASLAVILHDGSQMRA. Residues 28-381 are Lumenal-facing; it reads KAFPETRDYS…NVDECSSDYT (354 aa). Asparagine 112, asparagine 158, asparagine 164, asparagine 200, asparagine 232, asparagine 266, and asparagine 291 each carry an N-linked (GlcNAc...) asparagine glycan. 2 disordered regions span residues 136 to 167 and 179 to 219; these read PTITPPAHTTGTSSSTVSHTTGNTTQPSNQTT and STTG…LAPQ. Low complexity predominate over residues 143-160; sequence HTTGTSSSTVSHTTGNTT. Low complexity predominate over residues 188 to 208; the sequence is PTHAPGTTAAAHNTTRTAAPA. Cysteine 237 and cysteine 274 form a disulfide bridge. Cysteine 339 and cysteine 376 form a disulfide bridge. Residues 382–402 traverse the membrane as a helical segment; it reads IVLPVIGAIVVGLCLMGMGVY. Residues 403–416 lie on the Cytoplasmic side of the membrane; the sequence is KIRLRCQSSGYQRI.

The protein belongs to the LAMP family. In terms of assembly, monomer. Interacts with FURIN. As to quaternary structure, (Microbial infection) Interacts with mumps virus protein F; this interaction promotes protein F cleavage by FURIN. As to expression, detected in tonsil interdigitating dendritic cells, in spleen, lymph node, Peyer's patches in the small instestine, in thymus medulla and in B-cells (at protein level). Expressed in lymphoid organs and dendritic cells. Expressed in lung. Up-regulated in carcinomas of the esophagus, colon, rectum, ureter, stomach, breast, fallopian tube, thyroid and parotid tissues.

It is found in the cell surface. Its subcellular location is the lysosome membrane. The protein resides in the cytoplasmic vesicle membrane. The protein localises to the early endosome membrane. Its function is as follows. Lysosomal membrane glycoprotein which plays a role in the unfolded protein response (UPR) that contributes to protein degradation and cell survival during proteasomal dysfunction. Plays a role in the process of fusion of the lysosome with the autophagosome, thereby modulating the autophagic process. Promotes hepatocellular lipogenesis through activation of the PI3K/Akt pathway. May also play a role in dendritic cell function and in adaptive immunity. Functionally, (Microbial infection) Plays a positive role in post-entry steps of influenza A virus replication, either virus uncoating, cytosolic transport, or nuclear import of viral components, and promotes nuclear accumulation of influenza nucleoprotein/NP at early stages of viral infection. In terms of biological role, (Microbial infection) Supports the FURIN-mediated cleavage of mumps virus fusion protein F by interacting with both FURIN and the unprocessed form but not the processed form of the viral protein F. (Microbial infection) Promotes the intracellular proliferation of Salmonella typhimuium. The polypeptide is Lysosome-associated membrane glycoprotein 3 (LAMP3) (Homo sapiens (Human)).